The primary structure comprises 312 residues: tRNA dimethylallyltransferase (312 aa).

An ATP-binding site is contributed by 17–24; that stretch reads GPTASGKT. Residue 19–24 coordinates substrate; it reads TASGKT. Interaction with substrate tRNA stretches follow at residues 42–45, 166–170, and 247–252; these read DSAL, QRLLR, and RCVGYR.

It belongs to the IPP transferase family. Monomer. Mg(2+) is required as a cofactor.

It carries out the reaction adenosine(37) in tRNA + dimethylallyl diphosphate = N(6)-dimethylallyladenosine(37) in tRNA + diphosphate. In terms of biological role, catalyzes the transfer of a dimethylallyl group onto the adenine at position 37 in tRNAs that read codons beginning with uridine, leading to the formation of N6-(dimethylallyl)adenosine (i(6)A). The polypeptide is tRNA dimethylallyltransferase (Sodalis glossinidius (strain morsitans)).